We begin with the raw amino-acid sequence, 249 residues long: Small ribosomal subunit protein eS6 (249 aa).

The span at 216 to 229 (RMKEAKEKRQEQIA) shows a compositional bias: basic and acidic residues. The tract at residues 216 to 249 (RMKEAKEKRQEQIAKRRRLSSLRASTSKSESSQK) is disordered. 5 positions are modified to phosphoserine: S235, S236, S240, S244, and S247. Positions 236–249 (SLRASTSKSESSQK) are enriched in low complexity.

Belongs to the eukaryotic ribosomal protein eS6 family. In terms of assembly, component of the small ribosomal subunit. In terms of processing, ribosomal protein S6 is the major substrate of protein kinases in eukaryote ribosomes. The phosphorylation is stimulated by growth factors, tumor promoting agents, and mitogens. It is dephosphorylated at growth arrest.

The protein resides in the cytoplasm. Its function is as follows. Component of the 40S small ribosomal subunit. Plays an important role in controlling cell growth and proliferation through the selective translation of particular classes of mRNA. This Oncorhynchus mykiss (Rainbow trout) protein is Small ribosomal subunit protein eS6 (rps6).